A 244-amino-acid chain; its full sequence is MSESSTPNVKYSRVLLKVSGEALMGEKGFGCDVEVLDKLSHDLKEVYDFGIQLCLVVGGGNIFRGASSSSPFGFERASNDYIGMLATMMNALSLQNALEKINVQSRVLSAIPITAVCETYIRRRAIRHLEKGRVVICAAGVGNPFFTTDTAAALRGIEMGCDAIFKGTQVDGVYSADPKKTVDAVRYDRISYRDLLSLDLKIMDVAAVSLAREHSVPIIVFNLGKRGSFADIIRGRGLYTTICN.

17 to 20 (KVSG) contacts ATP. The segment at 25–30 (GEKGFG) is involved in allosteric activation by GTP. Gly-59 serves as a coordination point for UMP. 2 residues coordinate ATP: Gly-60 and Arg-64. UMP-binding positions include Asp-80 and 141–148 (VGNPFFTT). Residues Thr-168, Gln-169, Tyr-174, and Asp-177 each coordinate ATP.

Belongs to the UMP kinase family. Homohexamer.

It is found in the cytoplasm. It catalyses the reaction UMP + ATP = UDP + ADP. Its pathway is pyrimidine metabolism; CTP biosynthesis via de novo pathway; UDP from UMP (UMPK route): step 1/1. Its activity is regulated as follows. Allosterically activated by GTP. Inhibited by UTP. Catalyzes the reversible phosphorylation of UMP to UDP. In Ehrlichia canis (strain Jake), this protein is Uridylate kinase.